The chain runs to 911 residues: Chitin synthase G (911 aa).

Disordered stretches follow at residues 1–66 (MAYQ…VSGY) and 107–138 (GRVASPYARSDTSSTEAWRQRQAPGGGPGGLR). Positions 12–34 (PHYDDNGHRLQDLPHGSYEEEAS) are enriched in basic and acidic residues. Over residues 54 to 66 (QHGSSTTRPVSGY) the composition is skewed to polar residues. Helical transmembrane passes span 579 to 599 (IFSTVLTWFSLASYWLTTTVI), 624 to 644 (IINTIVKYVYLGFLLLQFILA), 659 to 679 (SFVVFGIIQVYVVIDALYLVV), 711 to 731 (IIIIALAATFGLYFVASFMYL), 840 to 860 (LVTFWIFSNAFLAVCITSDGV), and 879 to 899 (ALLWSNAVVALFRFIGACWFL).

This sequence belongs to the chitin synthase family. Class III subfamily.

Its subcellular location is the cell membrane. The catalysed reaction is [(1-&gt;4)-N-acetyl-beta-D-glucosaminyl](n) + UDP-N-acetyl-alpha-D-glucosamine = [(1-&gt;4)-N-acetyl-beta-D-glucosaminyl](n+1) + UDP + H(+). Functionally, polymerizes chitin, a structural polymer of the cell wall and septum, by transferring the sugar moiety of UDP-GlcNAc to the non-reducing end of the growing chitin polymer. In Aspergillus fumigatus (strain ATCC MYA-4609 / CBS 101355 / FGSC A1100 / Af293) (Neosartorya fumigata), this protein is Chitin synthase G (chsG).